A 253-amino-acid chain; its full sequence is uncharacterized protein (253 aa).

The N-terminal stretch at 1 to 25 (MRKKKFLSKVSFGSLFLLCGTVLSA) is a signal peptide. Residue cysteine 26 is the site of N-palmitoyl cysteine attachment. A lipid anchor (S-diacylglycerol cysteine) is attached at cysteine 26.

The protein belongs to the MG439/MG440 family.

It is found in the cell membrane. This is an uncharacterized protein from Mycoplasma pneumoniae (strain ATCC 29342 / M129 / Subtype 1) (Mycoplasmoides pneumoniae).